The primary structure comprises 200 residues: MAGFKQLSGLVVPLDAANVDTDAIIPKQFLQAITRIGFGKHLFHEWRYLDVEGTKPNPEFVLNYPQYQGATILLARKNLGCGSSREHAPWALADYGFKVMIAPSFADIFYNNSLNNHMLPIRLSEEEVEEIFQWVWANEGKQIHVDLEAMTVTVGDKVYTFELDEFRRHCLLNGLDNIGLTLQHEDKISAYEKNIPAFLR.

This sequence belongs to the LeuD family. LeuD type 1 subfamily. Heterodimer of LeuC and LeuD.

It carries out the reaction (2R,3S)-3-isopropylmalate = (2S)-2-isopropylmalate. Its pathway is amino-acid biosynthesis; L-leucine biosynthesis; L-leucine from 3-methyl-2-oxobutanoate: step 2/4. Its function is as follows. Catalyzes the isomerization between 2-isopropylmalate and 3-isopropylmalate, via the formation of 2-isopropylmaleate. This Haemophilus influenzae (strain ATCC 51907 / DSM 11121 / KW20 / Rd) protein is 3-isopropylmalate dehydratase small subunit (leuD).